We begin with the raw amino-acid sequence, 89 residues long: Small ribosomal subunit protein uS15 (89 aa).

Residues 1–24 are disordered; that stretch reads MALTQTKKQELISQYQAHETDTGS.

The protein belongs to the universal ribosomal protein uS15 family. In terms of assembly, part of the 30S ribosomal subunit. Forms a bridge to the 50S subunit in the 70S ribosome, contacting the 23S rRNA.

Its function is as follows. One of the primary rRNA binding proteins, it binds directly to 16S rRNA where it helps nucleate assembly of the platform of the 30S subunit by binding and bridging several RNA helices of the 16S rRNA. Functionally, forms an intersubunit bridge (bridge B4) with the 23S rRNA of the 50S subunit in the ribosome. This is Small ribosomal subunit protein uS15 from Microcystis aeruginosa (strain NIES-843 / IAM M-2473).